Reading from the N-terminus, the 212-residue chain is Protein HP-25 homolog 1 (212 aa).

The first 34 residues, 1–34 (MPGGRRRVGSMNIAGFWILAQFVLLLVANVKSSA), serve as a signal peptide directing secretion. Positions 36–66 (SELCGPRGARGPPGLSGLPGPPGYTGPIGMP) are disordered. Positions 40–53 (GPRGARGPPGLSGL) are enriched in low complexity. Residues 40–76 (GPRGARGPPGLSGLPGPPGYTGPIGMPGLTGRPGLPG) form the Collagen-like domain. The C1q domain occupies 82–212 (PPLPQSAFSV…VFYGFLLNGN (131 aa)). Asparagine 125 carries an N-linked (GlcNAc...) asparagine glycan.

The protein localises to the secreted. This Bos taurus (Bovine) protein is Protein HP-25 homolog 1.